A 248-amino-acid chain; its full sequence is MSLCSLAFTLFLTVVAGIKCNVTDVCAGSPGIPGAPGNHGLPGRDGRDGVKGDPGPPGPMGPPGGMPGLPGRDGLPGAPGAPGERGDKGEPGERGLPGFPAYLDEELQTELYEIKHQILQTMGVLSLQGSMLSVGDKVFSTNGQSVNFDTIKEMCTRAGGNIAVPRTPEENEAIASIAKKYNNYVYLGMIEDQTPGDFHYLDGASVNYTNWYPGEPRGQGKEKCVEMYTDGTWNDRGCLQYRLAVCEF.

Residues M1 to C20 form the signal peptide. The region spanning G28 to P100 is the Collagen-like domain. P30, P33, P36, P42, P54, P57, P63, P67, P70, and P76 each carry 4-hydroxyproline. The tract at residues G31–F99 is disordered. Residues P42–K51 are compositionally biased toward basic and acidic residues. Residues P54–G65 show a composition bias toward pro residues. Residues L69 to P82 show a composition bias toward low complexity. Basic and acidic residues predominate over residues E84–E93. The C-type lectin domain maps to S133–F248. Disulfide bonds link C155-C246 and C224-C238. N207 carries N-linked (GlcNAc...) asparagine glycosylation. Ca(2+)-binding residues include E215, R217, N234, and D235.

This sequence belongs to the SFTPA family. Oligomeric complex of 6 set of homotrimers.

The protein resides in the secreted. Its subcellular location is the extracellular space. The protein localises to the extracellular matrix. It localises to the surface film. In terms of biological role, in presence of calcium ions, it binds to surfactant phospholipids and contributes to lower the surface tension at the air-liquid interface in the alveoli of the mammalian lung and is essential for normal respiration. Enhances the expression of MYO18A/SP-R210 on alveolar macrophages. In Rattus norvegicus (Rat), this protein is Pulmonary surfactant-associated protein A (Sftpa1).